The primary structure comprises 64 residues: Large ribosomal subunit protein bL35 (64 aa).

The span at 1–14 (MKQKTHKGTAKRIK) shows a compositional bias: basic residues. Residues 1–48 (MKQKTHKGTAKRIKVTGSGKLRREQANRRHLLEGKPSKRTRRLKGTED) form a disordered region. Basic and acidic residues predominate over residues 21–36 (LRREQANRRHLLEGKP).

Belongs to the bacterial ribosomal protein bL35 family.

In Corynebacterium aurimucosum (strain ATCC 700975 / DSM 44827 / CIP 107346 / CN-1) (Corynebacterium nigricans), this protein is Large ribosomal subunit protein bL35.